A 172-amino-acid polypeptide reads, in one-letter code: Small ribosomal subunit protein uS4 (172 aa).

Residues 104 to 168 (RRLQTIVYRK…SPLAKMAQGG (65 aa)) form the S4 RNA-binding domain.

It belongs to the universal ribosomal protein uS4 family. As to quaternary structure, part of the 30S ribosomal subunit. Contacts protein S5. The interaction surface between S4 and S5 is involved in control of translational fidelity.

Its function is as follows. One of the primary rRNA binding proteins, it binds directly to 16S rRNA where it nucleates assembly of the body of the 30S subunit. In terms of biological role, with S5 and S12 plays an important role in translational accuracy. This is Small ribosomal subunit protein uS4 from Thermofilum pendens (strain DSM 2475 / Hrk 5).